Reading from the N-terminus, the 142-residue chain is DNA-directed RNA polymerase II subunit RPB4 (142 aa).

This sequence belongs to the eukaryotic RPB4 RNA polymerase subunit family. Component of the RNA polymerase II (Pol II) core complex consisting of 12 subunits: a ten-subunit catalytic core composed of POLR2A/RPB1, POLR2B/RPB2, POLR2C/RPB3, POLR2I/RPB9, POLR2J/RPB11, POLR2E/RPABC1, POLR2F/RPABC2, POLR2H/RPABC3, POLR2K/RPABC4 and POLR2L/RPABC5 and a mobile stalk composed of two subunits POLR2D/RPB4 and POLR2G/RPB7, protruding from the core and functioning primarily in transcription initiation. Part of Pol II(G) complex, in which Pol II core associates with an additional subunit POLR2M; unlike conventional Pol II, Pol II(G) functions as a transcriptional repressor. Part of TBP-based Pol II pre-initiation complex (PIC), in which Pol II core assembles with general transcription factors and other specific initiation factors including GTF2E1, GTF2E2, GTF2F1, GTF2F2, TCEA1, ERCC2, ERCC3, GTF2H2, GTF2H3, GTF2H4, GTF2H5, GTF2A1, GTF2A2, GTF2B and TBP; this large multi-subunit PIC complex mediates DNA unwinding and targets Pol II core to the transcription start site where the first phosphodiester bond forms.

It localises to the nucleus. Its function is as follows. Core component of RNA polymerase II (Pol II), a DNA-dependent RNA polymerase which synthesizes mRNA precursors and many functional non-coding RNAs using the four ribonucleoside triphosphates as substrates. Pol II is the central component of the basal RNA polymerase II transcription machinery. It is composed of mobile elements that move relative to each other. POLR2D/RPB4 is part of a subcomplex with POLR2G/RPB7 that binds to a pocket formed by POLR2A/RPB1, POLR2B/RPB2 and POLR2F/RPABC2 at the base of the clamp element. The POLR2D/RPB4-POLR2G/RPB7 subcomplex seems to lock the clamp via POLR2G/RPB7 in the closed conformation thus preventing double-stranded DNA to enter the active site cleft. The POLR2D/RPB4-POLR2G/RPB7 subcomplex binds single-stranded DNA and RNA. In Homo sapiens (Human), this protein is DNA-directed RNA polymerase II subunit RPB4 (POLR2D).